The chain runs to 142 residues: Nucleoside diphosphate kinase (142 aa).

Residues Lys11, Phe59, Arg87, Thr93, Arg104, and Asn114 each contribute to the ATP site. His117 acts as the Pros-phosphohistidine intermediate in catalysis.

The protein belongs to the NDK family. In terms of assembly, homotetramer. It depends on Mg(2+) as a cofactor.

It is found in the cytoplasm. It catalyses the reaction a 2'-deoxyribonucleoside 5'-diphosphate + ATP = a 2'-deoxyribonucleoside 5'-triphosphate + ADP. The enzyme catalyses a ribonucleoside 5'-diphosphate + ATP = a ribonucleoside 5'-triphosphate + ADP. In terms of biological role, major role in the synthesis of nucleoside triphosphates other than ATP. The ATP gamma phosphate is transferred to the NDP beta phosphate via a ping-pong mechanism, using a phosphorylated active-site intermediate. The polypeptide is Nucleoside diphosphate kinase (Yersinia pseudotuberculosis serotype I (strain IP32953)).